Reading from the N-terminus, the 422-residue chain is MLYYLFEWLHKLNFPGAGMFGYTSFRALMAIILALLISSIWGDKFINLLKRKQITETQRDAKIDPFGVNKVGVPSMGGVIIIVAILIPCLLLGKLHNIYMILMLITTVWLGSLGFADDYIKIFKKDKEGLHGKFKIIGQVGLGLIVGLTLYLSPDVVIRENIEVQKSENEIEVIHGTHDLKSTQTTIPFFKSNNLDYADLVGFMGEHAQTAGWILFVIITIFVVTAVSNGANLNDGMDGMAAGNSAIIGLTLGILAYVSSHIEFAGYLNIMYIPGSEELVIFICAFIGALIGFLWYNAYPAQVFMGDTGSLTIGGIIAVFAIIIHKELLIPILCGIFLVENLSVLLQRFYYKAGKRKGIKQRLFKRAPIHDHFRTSMSLVEPGCSVKFTKPDQLFHESKITVRFWIVTIVLAAITIITLKIR.

9 consecutive transmembrane segments (helical) span residues 28–48 (LMAI…FINL), 71–91 (VGVP…PCLL), 95–115 (LHNI…SLGF), 136–156 (IIGQ…SPDV), 211–231 (AGWI…SNGA), 246–266 (AIIG…EFAG), 279–299 (LVIF…YNAY), 313–333 (IGGI…IPIL), and 399–419 (KITV…IITL).

The protein belongs to the glycosyltransferase 4 family. MraY subfamily. Requires Mg(2+) as cofactor.

It is found in the cell inner membrane. It catalyses the reaction UDP-N-acetyl-alpha-D-muramoyl-L-alanyl-gamma-D-glutamyl-meso-2,6-diaminopimeloyl-D-alanyl-D-alanine + di-trans,octa-cis-undecaprenyl phosphate = di-trans,octa-cis-undecaprenyl diphospho-N-acetyl-alpha-D-muramoyl-L-alanyl-D-glutamyl-meso-2,6-diaminopimeloyl-D-alanyl-D-alanine + UMP. It functions in the pathway cell wall biogenesis; peptidoglycan biosynthesis. Functionally, catalyzes the initial step of the lipid cycle reactions in the biosynthesis of the cell wall peptidoglycan: transfers peptidoglycan precursor phospho-MurNAc-pentapeptide from UDP-MurNAc-pentapeptide onto the lipid carrier undecaprenyl phosphate, yielding undecaprenyl-pyrophosphoryl-MurNAc-pentapeptide, known as lipid I. In Bacteroides fragilis (strain ATCC 25285 / DSM 2151 / CCUG 4856 / JCM 11019 / LMG 10263 / NCTC 9343 / Onslow / VPI 2553 / EN-2), this protein is Phospho-N-acetylmuramoyl-pentapeptide-transferase.